The chain runs to 507 residues: Histidine ammonia-lyase (507 aa).

The 5-imidazolinone (Ala-Gly) cross-link spans 141-143; the sequence is ASG. S142 carries the 2,3-didehydroalanine (Ser) modification.

It belongs to the PAL/histidase family. Contains an active site 4-methylidene-imidazol-5-one (MIO), which is formed autocatalytically by cyclization and dehydration of residues Ala-Ser-Gly.

The protein localises to the cytoplasm. The catalysed reaction is L-histidine = trans-urocanate + NH4(+). It participates in amino-acid degradation; L-histidine degradation into L-glutamate; N-formimidoyl-L-glutamate from L-histidine: step 1/3. This Cereibacter sphaeroides (strain KD131 / KCTC 12085) (Rhodobacter sphaeroides) protein is Histidine ammonia-lyase.